A 348-amino-acid polypeptide reads, in one-letter code: Dihydroorotase (348 aa).

H17 and H19 together coordinate Zn(2+). Substrate is bound by residues 19–21 and N45; that span reads HLR. Residues K103, H140, and H178 each coordinate Zn(2+). K103 carries the post-translational modification N6-carboxylysine. H140 contributes to the substrate binding site. L223 provides a ligand contact to substrate. Residue D251 participates in Zn(2+) binding. Residue D251 is part of the active site. Substrate-binding residues include H255 and A267.

This sequence belongs to the metallo-dependent hydrolases superfamily. DHOase family. Class II DHOase subfamily. Homodimer. Zn(2+) is required as a cofactor.

It carries out the reaction (S)-dihydroorotate + H2O = N-carbamoyl-L-aspartate + H(+). The protein operates within pyrimidine metabolism; UMP biosynthesis via de novo pathway; (S)-dihydroorotate from bicarbonate: step 3/3. Its function is as follows. Catalyzes the reversible cyclization of carbamoyl aspartate to dihydroorotate. The protein is Dihydroorotase of Yersinia pseudotuberculosis serotype O:1b (strain IP 31758).